Reading from the N-terminus, the 634-residue chain is Sodium-dependent neutral amino acid transporter B(0)AT1 (634 aa).

Topologically, residues methionine 1–tyrosine 41 are cytoplasmic. A Phosphoserine modification is found at serine 17. A helical membrane pass occupies residues leucine 42 to cysteine 62. Residues glutamine 63–histidine 65 are Extracellular-facing. Residues glycine 66 to leucine 86 traverse the membrane as a helical segment. At histidine 87 to leucine 120 the chain is on the cytoplasmic side. A helical transmembrane segment spans residues valine 121–phenylalanine 141. At asparagine 142–serine 192 the chain is on the extracellular side. Asparagine 158 and asparagine 182 each carry an N-linked (GlcNAc...) asparagine glycan. Residues isoleucine 193–isoleucine 213 form a helical membrane-spanning segment. Residues arginine 214–lysine 221 are Cytoplasmic-facing. The helical transmembrane segment at valine 222–leucine 242 threads the bilayer. Over threonine 243 to tryptophan 268 the chain is Extracellular. Asparagine 258 carries an N-linked (GlcNAc...) asparagine glycan. Residues leucine 269–phenylalanine 289 form a helical membrane-spanning segment. The Cytoplasmic portion of the chain corresponds to serine 290–valine 304. A helical membrane pass occupies residues isoleucine 305 to isoleucine 325. Topologically, residues glycine 326–serine 413 are extracellular. N-linked (GlcNAc...) asparagine glycans are attached at residues asparagine 354 and asparagine 368. The chain crosses the membrane as a helical span at residues proline 414–glycine 434. Residues asparagine 435–glutamate 456 lie on the Cytoplasmic side of the membrane. The helical transmembrane segment at leucine 457–serine 477 threads the bilayer. Residues glycine 478–serine 487 are Extracellular-facing. The helical transmembrane segment at tyrosine 488–valine 508 threads the bilayer. The Cytoplasmic segment spans residues tyrosine 509–glutamine 531. A helical membrane pass occupies residues valine 532–valine 552. Residues glutamine 553 to tryptophan 581 are Extracellular-facing. Residues valine 582–isoleucine 602 form a helical membrane-spanning segment. The Cytoplasmic portion of the chain corresponds to tyrosine 603–tyrosine 634. A Phosphoserine modification is found at serine 627.

Belongs to the sodium:neurotransmitter symporter (SNF) (TC 2.A.22) family. SLC6A19 subfamily. In terms of assembly, interacts in a tissue-specific manner with ACE2 in small intestine and with CLTRN in the kidney. Interacts with CLTRN; this interaction is required for trafficking of SLC6A19 to the plasma membrane and for its catalytic activation in kidneys. Interacts with ACE2; this interaction is required for trafficking of SLC6A19 to the plasma membrane and for its catalytic activation in intestine. Interacts with ANPEP; the interaction positively regulates its amino acid transporter activity.

The protein localises to the membrane. The enzyme catalyses L-alanine(in) + Na(+)(in) = L-alanine(out) + Na(+)(out). The catalysed reaction is L-cysteine(in) + Na(+)(in) = L-cysteine(out) + Na(+)(out). It catalyses the reaction L-glutamine(in) + Na(+)(in) = L-glutamine(out) + Na(+)(out). It carries out the reaction glycine(in) + Na(+)(in) = glycine(out) + Na(+)(out). The enzyme catalyses L-isoleucine(in) + Na(+)(in) = L-isoleucine(out) + Na(+)(out). The catalysed reaction is L-leucine(in) + Na(+)(in) = L-leucine(out) + Na(+)(out). It catalyses the reaction L-methionine(in) + Na(+)(in) = L-methionine(out) + Na(+)(out). It carries out the reaction L-phenylalanine(in) + Na(+)(in) = L-phenylalanine(out) + Na(+)(out). The enzyme catalyses L-serine(in) + Na(+)(in) = L-serine(out) + Na(+)(out). The catalysed reaction is L-tryptophan(in) + Na(+)(in) = L-tryptophan(out) + Na(+)(out). It catalyses the reaction L-tyrosine(in) + Na(+)(in) = L-tyrosine(out) + Na(+)(out). It carries out the reaction L-valine(in) + Na(+)(in) = L-valine(out) + Na(+)(out). Functionally, transporter that mediates resorption of neutral amino acids across the apical membrane of renal and intestinal epithelial cells. This uptake is sodium-dependent and chloride-independent. Requires CLTRN in kidney or ACE2 in intestine for cell surface expression and amino acid transporter activity. The sequence is that of Sodium-dependent neutral amino acid transporter B(0)AT1 (SLC6A19) from Pongo abelii (Sumatran orangutan).